The primary structure comprises 318 residues: MDYKVSRSGEIVEGEVEDSEKIDLPPGFRFHPTDEELITHYLRPKVVNSFFSAIAIGEVDLNKVEPWDLPWKAKLGEKEWYFFCVRDRKYPTGLRTNRATKAGYWKATGKDKEIFKGKSLVGMKKTLVFYKGRAPKGVKTNWVMHEYRLEGKFAIDNLSKTAKNECVISRVFHTRTDGTKEHMSVGLPPLMDSSPYLKSRGQDSLAGTTLGGLLSHVTYFSDQTTDDKSLVADFKTTMFGSGSTNFLPNIGSLLDFDPLFLQNNSSVLKMLLDNEETQFKKNLHNSGSSESELTASSWQGHNSYGSTGPVNLDCVWKF.

An NAC domain is found at 24–174 (LPPGFRFHPT…ECVISRVFHT (151 aa)). The DNA-binding element occupies 121 to 180 (VGMKKTLVFYKGRAPKGVKTNWVMHEYRLEGKFAIDNLSKTAKNECVISRVFHTRTDGTK).

In terms of tissue distribution, mostly expressed in root cortex, phloem, atrichoblast and quiescent center (QC), and, to a lower extent, in root endodermis, xylem, pericycle, columella and lateral root cap (LRC). Expressed in roots, cotyledons, very young leaves, senescing leaves, mature flowers and pollen.

It localises to the nucleus. Functionally, transcription activator that binds to DNA in promoters of target genes on a specific bipartite motif 5'-[AG]CGT[AG](4-5n)[AG][CT]ACGCAA-3'. Triggers the expression of senescence-associated genes during age-, salt- and dark-induced senescence through a regulatory network that may involve cross-talk with salt- and H(2)O(2)-dependent signaling pathways. The chain is NAC domain-containing protein 59 from Arabidopsis thaliana (Mouse-ear cress).